The chain runs to 195 residues: CASP-like protein 1B1 (195 aa).

Topologically, residues 1–22 (MGLQNEEKLELGCTGLQPKPKK) are cytoplasmic. The helical transmembrane segment at 23-43 (WVLLMVRVVAFLATAAATLVM) threads the bilayer. The Extracellular segment spans residues 44–75 (ALNKETKTLVVATVGNTPIKVTLTAKFQHTPA). The helical transmembrane segment at 76-96 (FVFFVIANGMASFHNLLMIMV) threads the bilayer. Residues 97 to 109 (ELCGQKLDYKGMR) are Cytoplasmic-facing. Residues 110–130 (LAMVAILDMMTVALVSGGASA) traverse the membrane as a helical segment. The Extracellular segment spans residues 131 to 163 (ATFMAELGKNGNSHARWDKICDKFETFCDHGGA). The helical transmembrane segment at 164–184 (ALIASSAGLILMMIISVMSIM) threads the bilayer. The Cytoplasmic portion of the chain corresponds to 185-195 (KLLIKPKSDSS).

The protein belongs to the Casparian strip membrane proteins (CASP) family. In terms of assembly, homodimer and heterodimers.

It localises to the cell membrane. The polypeptide is CASP-like protein 1B1 (Populus trichocarpa (Western balsam poplar)).